We begin with the raw amino-acid sequence, 214 residues long: MNMVFLGPPGAGKGTYAKRLIEMLNIPHISTGDMFREAVASKSELGKKVEEILKRGDLVPDDLTNSIVKDRLSKEDCKNGFILDGFPRTVAQAKALDEIMRSLGKDLDYVIYFEVDEEEVVKRISNRRICSNCGKIYNLITLPPKVDGKCDVCGGTLYQREDDKEEVVRKRYRVYMENTYPVIEYYQKSNKLFTVNGALDVDSVIKEVLNIIRR.

10–15 (GAGKGT) contacts ATP. Residues 30–59 (STGDMFREAVASKSELGKKVEEILKRGDLV) are NMP. AMP contacts are provided by residues T31, R36, 57–59 (DLV), 85–88 (GFPR), and Q92. The LID stretch occupies residues 126–163 (NRRICSNCGKIYNLITLPPKVDGKCDVCGGTLYQREDD). R127 is an ATP binding site. Positions 130 and 133 each coordinate Zn(2+). Residue 136-137 (IY) participates in ATP binding. Zn(2+)-binding residues include C150 and C153. AMP-binding residues include R160 and R171. L199 provides a ligand contact to ATP.

The protein belongs to the adenylate kinase family. As to quaternary structure, monomer.

The protein resides in the cytoplasm. It catalyses the reaction AMP + ATP = 2 ADP. The protein operates within purine metabolism; AMP biosynthesis via salvage pathway; AMP from ADP: step 1/1. Its function is as follows. Catalyzes the reversible transfer of the terminal phosphate group between ATP and AMP. Plays an important role in cellular energy homeostasis and in adenine nucleotide metabolism. This chain is Adenylate kinase, found in Thermosipho africanus (strain TCF52B).